The primary structure comprises 398 residues: Acetate kinase (398 aa).

Asn-9 lines the Mg(2+) pocket. ATP is bound at residue Lys-16. Arg-89 contributes to the substrate binding site. Asp-146 acts as the Proton donor/acceptor in catalysis. ATP contacts are provided by residues 206–210, 281–283, and 329–333; these read HLGNG, DCR, and GIGEN. Glu-384 contributes to the Mg(2+) binding site.

Belongs to the acetokinase family. As to quaternary structure, homodimer. Mg(2+) is required as a cofactor. Requires Mn(2+) as cofactor.

The protein resides in the cytoplasm. The enzyme catalyses acetate + ATP = acetyl phosphate + ADP. It functions in the pathway metabolic intermediate biosynthesis; acetyl-CoA biosynthesis; acetyl-CoA from acetate: step 1/2. Functionally, catalyzes the formation of acetyl phosphate from acetate and ATP. Can also catalyze the reverse reaction. The polypeptide is Acetate kinase (Vibrio campbellii (strain ATCC BAA-1116)).